The primary structure comprises 194 residues: Large ribosomal subunit protein eL15 (194 aa).

Positions 164-194 (SAGKKGRGLRNKGKGAEKIRPSIRANEGKGK) are disordered. Positions 167–176 (KKGRGLRNKG) are enriched in basic residues. Residues 177 to 194 (KGAEKIRPSIRANEGKGK) show a composition bias toward basic and acidic residues.

This sequence belongs to the eukaryotic ribosomal protein eL15 family.

This is Large ribosomal subunit protein eL15 (rpl15e) from Pyrococcus abyssi (strain GE5 / Orsay).